Reading from the N-terminus, the 115-residue chain is NADH-ubiquinone oxidoreductase chain 3 (115 aa).

Transmembrane regions (helical) follow at residues 3 to 23 (LLLT…IAFW), 55 to 75 (FFLV…LLPL), and 84 to 104 (LNTM…SLAY).

This sequence belongs to the complex I subunit 3 family. Core subunit of respiratory chain NADH dehydrogenase (Complex I) which is composed of 45 different subunits. Interacts with TMEM186. Interacts with TMEM242.

It is found in the mitochondrion inner membrane. It catalyses the reaction a ubiquinone + NADH + 5 H(+)(in) = a ubiquinol + NAD(+) + 4 H(+)(out). In terms of biological role, core subunit of the mitochondrial membrane respiratory chain NADH dehydrogenase (Complex I) which catalyzes electron transfer from NADH through the respiratory chain, using ubiquinone as an electron acceptor. Essential for the catalytic activity of complex I. The chain is NADH-ubiquinone oxidoreductase chain 3 from Balaenoptera musculus (Blue whale).